Consider the following 278-residue polypeptide: Protoheme IX farnesyltransferase (278 aa).

A run of 9 helical transmembrane segments spans residues 12–32 (VIWLLILSSVVGYVYAAGTVD), 36–56 (LAALTAAATLAVGGSAAFNHY), 72–92 (PLPAGAIPPSNALVYSLALSA), 105–124 (LPGVFVALGWFFYAVVYTVW), 130–150 (WLNILGGGFAGNATFLGGYAL), 157–177 (LPAVLISFAIYLWIPSHIWAL), 204–224 (AIISALNIASAAYILWLYLVF), 228–248 (LPGLALVLAGVAGTVATSALA), and 257–277 (MWRMYKASSPILTLFLLALVF).

Belongs to the UbiA prenyltransferase family. Protoheme IX farnesyltransferase subfamily.

The protein resides in the cell membrane. It catalyses the reaction heme b + (2E,6E)-farnesyl diphosphate + H2O = Fe(II)-heme o + diphosphate. It functions in the pathway porphyrin-containing compound metabolism; heme O biosynthesis; heme O from protoheme: step 1/1. Converts heme B (protoheme IX) to heme O by substitution of the vinyl group on carbon 2 of heme B porphyrin ring with a hydroxyethyl farnesyl side group. The sequence is that of Protoheme IX farnesyltransferase from Pyrobaculum neutrophilum (strain DSM 2338 / JCM 9278 / NBRC 100436 / V24Sta) (Thermoproteus neutrophilus).